A 230-amino-acid chain; its full sequence is Orotidine 5'-phosphate decarboxylase (230 aa).

Residues Asp10, Lys31, 58 to 67, Thr117, Arg179, Gln188, Gly208, and Arg209 each bind substrate; that span reads DLKLHDIPNT. Lys60 serves as the catalytic Proton donor.

The protein belongs to the OMP decarboxylase family. Type 1 subfamily. In terms of assembly, homodimer.

It carries out the reaction orotidine 5'-phosphate + H(+) = UMP + CO2. The protein operates within pyrimidine metabolism; UMP biosynthesis via de novo pathway; UMP from orotate: step 2/2. Its function is as follows. Catalyzes the decarboxylation of orotidine 5'-monophosphate (OMP) to uridine 5'-monophosphate (UMP). The chain is Orotidine 5'-phosphate decarboxylase from Staphylococcus haemolyticus (strain JCSC1435).